A 76-amino-acid chain; its full sequence is Proteolipid protein 2 (76 aa).

Residues 1–60 form the MARVEL domain; that stretch reads ISGPWSDFFRALGAVILYLMTSIVVLVERGNNSKGAAGVLGLCAAGLFGYDAYITFPSGT. A helical membrane pass occupies residues 8-28; sequence FFRALGAVILYLMTSIVVLVE. Asn31 carries an N-linked (GlcNAc...) asparagine glycan. The chain crosses the membrane as a helical span at residues 36 to 56; that stretch reads AAGVLGLCAAGLFGYDAYITF.

It is found in the membrane. May play a role in cell differentiation in the intestinal epithelium. The chain is Proteolipid protein 2 (PLP2) from Ovis aries (Sheep).